The following is a 106-amino-acid chain: uncharacterized protein (106 aa).

2 helical membrane passes run 17–37 (AGLL…AVLV) and 55–75 (FSSS…FMIF).

The protein resides in the membrane. This is an uncharacterized protein from Saccharomyces cerevisiae (strain ATCC 204508 / S288c) (Baker's yeast).